The primary structure comprises 268 residues: MPEGHTLHRLARLHQRRFAGAPVSVSSPQGRFADSASALNGRVLRRASAWGKHLFHHYVGGPVVHVHLGLYGTFTEWARPTDGWLPEPAGQVRMRMVGAEFGTDLRGPTVCESIDDGEVADVVARLGPDPLRSDANPSSAWSRITKSRRPIGALLMDQTVIAGVGNVYRNELLFRHRIDPQRPGRGIGEPEFDAAWNDLVSLMKVGLRRGKIIVVRPEHDHGLPSYLPDRPRTYVYRRAGEPCRVCGGVIRTALLEGRNVFWCPVCQT.

Proline 2 acts as the Schiff-base intermediate with DNA in catalysis. The active-site Proton donor is glutamate 3. The Proton donor; for beta-elimination activity role is filled by lysine 52. Residues arginine 125 and asparagine 166 each coordinate DNA. An FPG-type zinc finger spans residues 234–268 (YVYRRAGEPCRVCGGVIRTALLEGRNVFWCPVCQT). Residue arginine 258 is the Proton donor; for delta-elimination activity of the active site.

Belongs to the FPG family. Zn(2+) serves as cofactor.

It catalyses the reaction 2'-deoxyribonucleotide-(2'-deoxyribose 5'-phosphate)-2'-deoxyribonucleotide-DNA = a 3'-end 2'-deoxyribonucleotide-(2,3-dehydro-2,3-deoxyribose 5'-phosphate)-DNA + a 5'-end 5'-phospho-2'-deoxyribonucleoside-DNA + H(+). Its function is as follows. Involved in base excision repair of DNA damaged by oxidation or by mutagenic agents. Acts as a DNA glycosylase that recognizes and removes damaged bases. Has AP (apurinic/apyrimidinic) lyase activity and introduces nicks in the DNA strand. Cleaves the DNA backbone by beta-delta elimination to generate a single-strand break at the site of the removed base with both 3'- and 5'-phosphates. This Mycobacterium bovis (strain ATCC BAA-935 / AF2122/97) protein is Endonuclease 8 1 (nei1).